Consider the following 315-residue polypeptide: Acetyl-coenzyme A carboxylase carboxyl transferase subunit alpha (315 aa).

The region spanning leucine 36–isoleucine 289 is the CoA carboxyltransferase C-terminal domain.

It belongs to the AccA family. Acetyl-CoA carboxylase is a heterohexamer composed of biotin carboxyl carrier protein (AccB), biotin carboxylase (AccC) and two subunits each of ACCase subunit alpha (AccA) and ACCase subunit beta (AccD).

The protein localises to the cytoplasm. It carries out the reaction N(6)-carboxybiotinyl-L-lysyl-[protein] + acetyl-CoA = N(6)-biotinyl-L-lysyl-[protein] + malonyl-CoA. Its pathway is lipid metabolism; malonyl-CoA biosynthesis; malonyl-CoA from acetyl-CoA: step 1/1. Component of the acetyl coenzyme A carboxylase (ACC) complex. First, biotin carboxylase catalyzes the carboxylation of biotin on its carrier protein (BCCP) and then the CO(2) group is transferred by the carboxyltransferase to acetyl-CoA to form malonyl-CoA. This is Acetyl-coenzyme A carboxylase carboxyl transferase subunit alpha from Francisella tularensis subsp. holarctica (strain FTNF002-00 / FTA).